The primary structure comprises 370 residues: 4-hydroxy-3-methylbut-2-en-1-yl diphosphate synthase (flavodoxin) (370 aa).

[4Fe-4S] cluster contacts are provided by Cys270, Cys273, Cys305, and Glu312.

Belongs to the IspG family. The cofactor is [4Fe-4S] cluster.

The enzyme catalyses (2E)-4-hydroxy-3-methylbut-2-enyl diphosphate + oxidized [flavodoxin] + H2O + 2 H(+) = 2-C-methyl-D-erythritol 2,4-cyclic diphosphate + reduced [flavodoxin]. It functions in the pathway isoprenoid biosynthesis; isopentenyl diphosphate biosynthesis via DXP pathway; isopentenyl diphosphate from 1-deoxy-D-xylulose 5-phosphate: step 5/6. Converts 2C-methyl-D-erythritol 2,4-cyclodiphosphate (ME-2,4cPP) into 1-hydroxy-2-methyl-2-(E)-butenyl 4-diphosphate. The protein is 4-hydroxy-3-methylbut-2-en-1-yl diphosphate synthase (flavodoxin) of Azotobacter vinelandii (strain DJ / ATCC BAA-1303).